The following is a 503-amino-acid chain: Palmitoleoyl-protein carboxylesterase NOTUM (503 aa).

The first 19 residues, 1 to 19 (MGGEVRVLLLLGLLHWVGG), serve as a signal peptide directing secretion. Positions 23–53 (RKTWRRRGQQPPQPPPPPPLPQRAEVEPGAG) are disordered. A compositionally biased stretch (pro residues) spans 33–43 (PPQPPPPPPLP). Ser-88 is modified (phosphoserine). The N-linked (GlcNAc...) asparagine glycan is linked to Asn-103. Active-site charge relay system residues include Ser-239, Asp-347, and His-396.

It belongs to the pectinacetylesterase family. Notum subfamily. Widely expressed. Expressed in lung, ovary, kidney, liver and brain. Not detected in thymus, heart, spleen, stomach, skeletal muscle and bone marrow.

The protein resides in the secreted. The enzyme catalyses [Wnt protein]-O-(9Z)-hexadecenoyl-L-serine + H2O = [Wnt protein]-L-serine + (9Z)-hexadecenoate + H(+). In terms of biological role, carboxylesterase that acts as a key negative regulator of the Wnt signaling pathway by specifically mediating depalmitoleoylation of WNT proteins. Serine palmitoleoylation of WNT proteins is required for efficient binding to frizzled receptors. This chain is Palmitoleoyl-protein carboxylesterase NOTUM, found in Mus musculus (Mouse).